A 704-amino-acid polypeptide reads, in one-letter code: Elongation factor G (704 aa).

A tr-type G domain is found at 10-286 (KKVRNIGIMA…AVIDFLPNPM (277 aa)). Residues 19 to 26 (AHIDAGKT), 83 to 87 (DTPGH), and 137 to 140 (NKMD) each bind GTP.

It belongs to the TRAFAC class translation factor GTPase superfamily. Classic translation factor GTPase family. EF-G/EF-2 subfamily.

It is found in the cytoplasm. In terms of biological role, catalyzes the GTP-dependent ribosomal translocation step during translation elongation. During this step, the ribosome changes from the pre-translocational (PRE) to the post-translocational (POST) state as the newly formed A-site-bound peptidyl-tRNA and P-site-bound deacylated tRNA move to the P and E sites, respectively. Catalyzes the coordinated movement of the two tRNA molecules, the mRNA and conformational changes in the ribosome. The chain is Elongation factor G from Corynebacterium jeikeium (strain K411).